The chain runs to 500 residues: Taxoid 7-beta-hydroxylase (500 aa).

Residues 24 to 44 (PAILSTALTAIAGIIVLLVIT) form a helical membrane-spanning segment. Position 446 (cysteine 446) interacts with heme.

The protein belongs to the cytochrome P450 family.

Its subcellular location is the microsome membrane. It carries out the reaction taxusin + reduced [NADPH--hemoprotein reductase] + O2 = 7beta-hydroxytaxusin + oxidized [NADPH--hemoprotein reductase] + H2O + H(+). The catalysed reaction is 2alpha-hydroxytaxusin + reduced [NADPH--hemoprotein reductase] + O2 = 2alpha,7beta-dihydroxytaxusin + oxidized [NADPH--hemoprotein reductase] + H2O + H(+). It catalyses the reaction 7beta-hydroxytaxusin + reduced [NADPH--hemoprotein reductase] + O2 = 2alpha,7beta-dihydroxytaxusin + oxidized [NADPH--hemoprotein reductase] + H2O + H(+). It participates in alkaloid biosynthesis; taxol biosynthesis. Catalyzes the conversion of taxusin to 7-beta-hydroxytaxusin in taxol biosynthesis. Catalyzes the conversion of 2-alpha-hydroxytaxusin to 2-alpha-7-beta-hydroxytaxusin in taxol biosynthesis. This chain is Taxoid 7-beta-hydroxylase, found in Taxus cuspidata (Japanese yew).